A 522-amino-acid chain; its full sequence is UPF0288 protein MTH_1865 (522 aa).

It belongs to the UPF0288 family.

The chain is UPF0288 protein MTH_1865 from Methanothermobacter thermautotrophicus (strain ATCC 29096 / DSM 1053 / JCM 10044 / NBRC 100330 / Delta H) (Methanobacterium thermoautotrophicum).